The sequence spans 440 residues: Probable D-serine dehydratase (440 aa).

The residue at position 111 (Lys-111) is an N6-(pyridoxal phosphate)lysine.

It belongs to the serine/threonine dehydratase family. DsdA subfamily. Pyridoxal 5'-phosphate serves as cofactor.

The enzyme catalyses D-serine = pyruvate + NH4(+). This is Probable D-serine dehydratase from Rhizobium leguminosarum bv. trifolii (strain WSM2304).